Reading from the N-terminus, the 465-residue chain is Ribulose bisphosphate carboxylase large chain (465 aa).

Lysine 4 is subject to N6,N6,N6-trimethyllysine. Residues asparagine 113 and threonine 163 each coordinate substrate. Lysine 165 functions as the Proton acceptor in the catalytic mechanism. Lysine 167 serves as a coordination point for substrate. The Mg(2+) site is built by lysine 191, aspartate 193, and glutamate 194. Residue lysine 191 is modified to N6-carboxylysine. Histidine 284 (proton acceptor) is an active-site residue. 3 residues coordinate substrate: arginine 285, histidine 317, and serine 369.

The protein belongs to the RuBisCO large chain family. Type I subfamily. As to quaternary structure, heterohexadecamer of 8 large chains and 8 small chains; disulfide-linked. The disulfide link is formed within the large subunit homodimers. It depends on Mg(2+) as a cofactor. Post-translationally, the disulfide bond which can form in the large chain dimeric partners within the hexadecamer appears to be associated with oxidative stress and protein turnover.

It localises to the plastid. The protein resides in the chloroplast. The enzyme catalyses 2 (2R)-3-phosphoglycerate + 2 H(+) = D-ribulose 1,5-bisphosphate + CO2 + H2O. It carries out the reaction D-ribulose 1,5-bisphosphate + O2 = 2-phosphoglycolate + (2R)-3-phosphoglycerate + 2 H(+). In terms of biological role, ruBisCO catalyzes two reactions: the carboxylation of D-ribulose 1,5-bisphosphate, the primary event in carbon dioxide fixation, as well as the oxidative fragmentation of the pentose substrate in the photorespiration process. Both reactions occur simultaneously and in competition at the same active site. This Passiflora quadrangularis (Grenadine) protein is Ribulose bisphosphate carboxylase large chain.